The sequence spans 318 residues: Beta-ketoacyl-[acyl-carrier-protein] synthase III (318 aa).

Residues Cys-112 and His-245 contribute to the active site. The tract at residues 246–250 is ACP-binding; the sequence is QANIR. Residue Asn-275 is part of the active site.

This sequence belongs to the thiolase-like superfamily. FabH family. In terms of assembly, homodimer.

The protein resides in the cytoplasm. It carries out the reaction malonyl-[ACP] + acetyl-CoA + H(+) = 3-oxobutanoyl-[ACP] + CO2 + CoA. Its pathway is lipid metabolism; fatty acid biosynthesis. Functionally, catalyzes the condensation reaction of fatty acid synthesis by the addition to an acyl acceptor of two carbons from malonyl-ACP. Catalyzes the first condensation reaction which initiates fatty acid synthesis and may therefore play a role in governing the total rate of fatty acid production. Possesses both acetoacetyl-ACP synthase and acetyl transacylase activities. Its substrate specificity determines the biosynthesis of branched-chain and/or straight-chain of fatty acids. The chain is Beta-ketoacyl-[acyl-carrier-protein] synthase III from Nitrosomonas europaea (strain ATCC 19718 / CIP 103999 / KCTC 2705 / NBRC 14298).